A 491-amino-acid polypeptide reads, in one-letter code: Cyclin-A1-3 (491 aa).

Residues methionine 1 to alanine 21 are compositionally biased toward low complexity. 2 disordered regions span residues methionine 1–alanine 32 and serine 69–serine 106. Over residues asparagine 75 to proline 91 the composition is skewed to polar residues.

Belongs to the cyclin family. Cyclin AB subfamily.

The sequence is that of Cyclin-A1-3 (CYCA1-3) from Oryza sativa subsp. japonica (Rice).